Here is a 373-residue protein sequence, read N- to C-terminus: Chaperone protein DnaJ (373 aa).

The 65-residue stretch at 4–68 folds into the J domain; it reads NYYQILGVSK…QKRAAYDRLG (65 aa). The CR-type zinc finger occupies 136-214; it reads GIEKNINFSS…CHGMGRYHKQ (79 aa). The Zn(2+) site is built by C149, C152, C166, C169, C188, C191, C202, and C205. 4 CXXCXGXG motif repeats span residues 149–156, 166–173, 188–195, and 202–209; these read CNTCHGSG, CDACSGVG, CHKCQGNG, and CKKCHGMG.

The protein belongs to the DnaJ family. Homodimer. The cofactor is Zn(2+).

It is found in the cytoplasm. Its function is as follows. Participates actively in the response to hyperosmotic and heat shock by preventing the aggregation of stress-denatured proteins and by disaggregating proteins, also in an autonomous, DnaK-independent fashion. Unfolded proteins bind initially to DnaJ; upon interaction with the DnaJ-bound protein, DnaK hydrolyzes its bound ATP, resulting in the formation of a stable complex. GrpE releases ADP from DnaK; ATP binding to DnaK triggers the release of the substrate protein, thus completing the reaction cycle. Several rounds of ATP-dependent interactions between DnaJ, DnaK and GrpE are required for fully efficient folding. Also involved, together with DnaK and GrpE, in the DNA replication of plasmids through activation of initiation proteins. The protein is Chaperone protein DnaJ of Rickettsia rickettsii (strain Sheila Smith).